The following is a 548-amino-acid chain: Chaperonin GroEL (548 aa).

ATP-binding positions include 30 to 33, lysine 51, 87 to 91, glycine 415, 479 to 481, and aspartate 495; these read TLGP, DGTTT, and NAA.

The protein belongs to the chaperonin (HSP60) family. In terms of assembly, forms a cylinder of 14 subunits composed of two heptameric rings stacked back-to-back. Interacts with the co-chaperonin GroES.

It is found in the cytoplasm. The enzyme catalyses ATP + H2O + a folded polypeptide = ADP + phosphate + an unfolded polypeptide.. Functionally, together with its co-chaperonin GroES, plays an essential role in assisting protein folding. The GroEL-GroES system forms a nano-cage that allows encapsulation of the non-native substrate proteins and provides a physical environment optimized to promote and accelerate protein folding. The protein is Chaperonin GroEL of Pseudomonas fluorescens (strain Pf0-1).